A 415-amino-acid chain; its full sequence is uncharacterized protein (415 aa).

[4Fe-4S] cluster contacts are provided by cysteine 66, cysteine 72, cysteine 75, and cysteine 149. S-adenosyl-L-methionine contacts are provided by glutamine 249, phenylalanine 276, glutamate 296, and aspartate 344. Cysteine 370 acts as the Nucleophile in catalysis.

Belongs to the class I-like SAM-binding methyltransferase superfamily. RNA M5U methyltransferase family.

This is an uncharacterized protein from Brucella melitensis biotype 1 (strain ATCC 23456 / CCUG 17765 / NCTC 10094 / 16M).